The chain runs to 96 residues: Aspartyl/glutamyl-tRNA(Asn/Gln) amidotransferase subunit C (96 aa).

It belongs to the GatC family. In terms of assembly, heterotrimer of A, B and C subunits.

It catalyses the reaction L-glutamyl-tRNA(Gln) + L-glutamine + ATP + H2O = L-glutaminyl-tRNA(Gln) + L-glutamate + ADP + phosphate + H(+). The enzyme catalyses L-aspartyl-tRNA(Asn) + L-glutamine + ATP + H2O = L-asparaginyl-tRNA(Asn) + L-glutamate + ADP + phosphate + 2 H(+). Its function is as follows. Allows the formation of correctly charged Asn-tRNA(Asn) or Gln-tRNA(Gln) through the transamidation of misacylated Asp-tRNA(Asn) or Glu-tRNA(Gln) in organisms which lack either or both of asparaginyl-tRNA or glutaminyl-tRNA synthetases. The reaction takes place in the presence of glutamine and ATP through an activated phospho-Asp-tRNA(Asn) or phospho-Glu-tRNA(Gln). The polypeptide is Aspartyl/glutamyl-tRNA(Asn/Gln) amidotransferase subunit C (Oceanobacillus iheyensis (strain DSM 14371 / CIP 107618 / JCM 11309 / KCTC 3954 / HTE831)).